The following is a 60-amino-acid chain: Cytotoxin 10 (60 aa).

4 disulfides stabilise this stretch: C3/C21, C14/C38, C42/C53, and C54/C59.

This sequence belongs to the three-finger toxin family. Short-chain subfamily. Type IA cytotoxin sub-subfamily. As to quaternary structure, monomer in solution; Homodimer and oligomer in the presence of negatively charged lipids forming a pore with a size ranging between 20 and 30 Angstroms. As to expression, expressed by the venom gland.

The protein resides in the secreted. It localises to the target cell membrane. In terms of biological role, shows cytolytic activity on many different cells by forming pore in lipid membranes. In vivo, increases heart rate or kills the animal by cardiac arrest. In addition, it binds to heparin with high affinity, interacts with Kv channel-interacting protein 1 (KCNIP1) in a calcium-independent manner, and binds to integrin alpha-V/beta-3 (ITGAV/ITGB3) with moderate affinity. Has hemolytic activity towards human erythrocytes (EC(50)=0.162 uM) and cytolytic activity towards various cell lines. The polypeptide is Cytotoxin 10 (Naja naja (Indian cobra)).